Reading from the N-terminus, the 109-residue chain is Cell division suppressor protein YneA (109 aa).

The LysM domain occupies 39–90 (SEVDVNEGDSIWALADQYAAKSDMAKADFVSWVEKENNLTDGHVKAGDYVVI).

This sequence belongs to the YneA family.

The protein resides in the cytoplasm. Functionally, inhibits cell division during the SOS response. Affects a later stage of the cell division protein assembly, after the assembly of the Z ring, by probably suppressing recruitment of FtsL and/or DivIC to the division machinery. This chain is Cell division suppressor protein YneA, found in Listeria innocua serovar 6a (strain ATCC BAA-680 / CLIP 11262).